Reading from the N-terminus, the 141-residue chain is uncharacterized protein (141 aa).

A compositionally biased stretch (basic and acidic residues) spans 1 to 17 (MNKSESENDSEYHKEYS). The segment at 1-24 (MNKSESENDSEYHKEYSESSDPED) is disordered. Residues 52-115 (IQNLNNNVKE…QMLFEKMRDM (64 aa)) are a coiled coil.

This is an uncharacterized protein from Acanthamoeba polyphaga (Amoeba).